A 236-amino-acid chain; its full sequence is Small ribosomal subunit protein uS2c (236 aa).

Belongs to the universal ribosomal protein uS2 family.

It localises to the plastid. Its subcellular location is the chloroplast. The chain is Small ribosomal subunit protein uS2c (rps2) from Calycanthus floridus var. glaucus (Eastern sweetshrub).